The chain runs to 218 residues: MMP 1-O-methyltransferase (218 aa).

Phe-20, Gly-46, Ser-52, Asp-71, Gly-75, and Ser-124 together coordinate S-adenosyl-L-methionine. Residue Asp-141 participates in Mg(2+) binding. His-144 functions as the Proton acceptor in the catalytic mechanism. Arg-151 lines the S-adenosyl-L-methionine pocket. 2 residues coordinate Mg(2+): His-169 and Asp-170.

It belongs to the methyltransferase superfamily. As to quaternary structure, homodimer. Mg(2+) is required as a cofactor.

It catalyses the reaction 3,3'-di-O-methyl-4alpha-mannobiose + S-adenosyl-L-methionine = 1,3,3'-tri-O-methyl-4alpha-mannobiose + S-adenosyl-L-homocysteine + H(+). Inhibited by EDTA. Functionally, involved in the biosynthesis of 3-O-methylmannose polysaccharides (MMP), which are intracellular polymethylated polysaccharides implicated in the modulation of fatty acid metabolism in non-tuberculous mycobacteria. Specifically methylates the 1-OH position of 3,3'-di-O-methyl-4alpha-mannobiose, a probable early precursor of MMP, yielding the reducing end dimannoside of MMP. The sequence is that of MMP 1-O-methyltransferase from Mycolicibacterium hassiacum (strain DSM 44199 / CIP 105218 / JCM 12690 / 3849) (Mycobacterium hassiacum).